Reading from the N-terminus, the 186-residue chain is C-type lectin domain family 19 member A (186 aa).

An N-terminal signal peptide occupies residues 1–19 (MQRWTLWAAAFLTLHSAQA). A C-type lectin domain is found at 47-179 (FKGHCYRFFP…CSRKFPFVCK (133 aa)). A glycan (N-linked (GlcNAc...) asparagine) is linked at N58. 2 disulfide bridges follow: C68-C178 and C151-C170.

Its subcellular location is the secreted. This Homo sapiens (Human) protein is C-type lectin domain family 19 member A.